The primary structure comprises 190 residues: Superoxide dismutase [Fe] (190 aa).

Residues histidine 27, histidine 75, aspartate 156, and histidine 160 each coordinate Fe cation.

The protein belongs to the iron/manganese superoxide dismutase family. In terms of assembly, homodimer. It depends on Fe cation as a cofactor.

The enzyme catalyses 2 superoxide + 2 H(+) = H2O2 + O2. Destroys superoxide anion radicals which are normally produced within the cells and which are toxic to biological systems. The chain is Superoxide dismutase [Fe] (SODB) from Entamoeba histolytica (strain ATCC 30459 / HM-1:IMSS / ABRM).